Consider the following 101-residue polypeptide: Apolipoprotein C-II (101 aa).

The N-terminal stretch at 1–22 (MGTRFLLALCLVLLVLGFEVQG) is a signal peptide. A propeptide spans 23 to 28 (AQLPQQ) (removed in mature form). Residues 66–74 (AVDEKLRDL) form a lipid binding region. Residues 78-101 (STAAMSTYTGIFTDQVLSVLKGEE) form a lipoprotein lipase cofactor region.

It belongs to the apolipoprotein C2 family. Post-translationally, proapolipoprotein C-II is synthesized as a sialic acid containing glycoprotein which is subsequently desialylated prior to its proteolytic processing. Proapolipoprotein C-II, the major form found in plasma undergoes proteolytic cleavage of its N-terminal hexapeptide to generate apolipoprotein C-II, which occurs as the minor form in plasma.

Its subcellular location is the secreted. Component of chylomicrons, very low-density lipoproteins (VLDL), low-density lipoproteins (LDL), and high-density lipoproteins (HDL) in plasma. Plays an important role in lipoprotein metabolism as an activator of lipoprotein lipase. Both proapolipoprotein C-II and apolipoprotein C-II can activate lipoprotein lipase. The chain is Apolipoprotein C-II (APOC2) from Papio anubis (Olive baboon).